The sequence spans 303 residues: Signal recognition particle receptor FtsY (303 aa).

GTP-binding positions include 108–115 (GVNGVGKT), 190–194 (DTAGR), and 254–257 (TKLD).

It belongs to the GTP-binding SRP family. FtsY subfamily. In terms of assembly, part of the signal recognition particle protein translocation system, which is composed of SRP and FtsY. SRP is a ribonucleoprotein composed of Ffh and a 4.5S RNA molecule.

Its subcellular location is the cell inner membrane. It is found in the cytoplasm. The catalysed reaction is GTP + H2O = GDP + phosphate + H(+). In terms of biological role, involved in targeting and insertion of nascent membrane proteins into the cytoplasmic membrane. Acts as a receptor for the complex formed by the signal recognition particle (SRP) and the ribosome-nascent chain (RNC). Interaction with SRP-RNC leads to the transfer of the RNC complex to the Sec translocase for insertion into the membrane, the hydrolysis of GTP by both Ffh and FtsY, and the dissociation of the SRP-FtsY complex into the individual components. This Rickettsia prowazekii (strain Madrid E) protein is Signal recognition particle receptor FtsY.